The chain runs to 361 residues: [LysW]-lysine hydrolase (361 aa).

Zn(2+) is bound at residue H67. The active site involves D69. D91 is a Zn(2+) binding site. The active-site Proton acceptor is the E124. Residues E125, E148, and H326 each contribute to the Zn(2+) site.

Belongs to the peptidase M20A family. LysK subfamily. Requires Zn(2+) as cofactor. It depends on Co(2+) as a cofactor.

The protein localises to the cytoplasm. It catalyses the reaction [amino-group carrier protein]-C-terminal-gamma-(L-lysyl)-L-glutamate + H2O = [amino-group carrier protein]-C-terminal-L-glutamate + L-lysine. It participates in amino-acid biosynthesis; L-lysine biosynthesis via AAA pathway; L-lysine from L-alpha-aminoadipate (Thermus route): step 5/5. Catalyzes the release of L-lysine from [LysW]-gamma-L-lysine. The sequence is that of [LysW]-lysine hydrolase from Thermus thermophilus (strain ATCC 27634 / DSM 579 / HB8).